Consider the following 480-residue polypeptide: Prostacyclin synthase (480 aa).

The chain crosses the membrane as a helical span at residues 1–21; sequence MMWTALLLVGLSILVIVLYGR. Residues Arg104, Leu110, Asn277, 338–339, and Arg362 contribute to the substrate site; that span reads TR. Cys421 lines the heme pocket.

Belongs to the cytochrome P450 family. It depends on heme as a cofactor.

It localises to the endoplasmic reticulum membrane. The catalysed reaction is prostaglandin H2 = prostaglandin I2. It catalyses the reaction a hydroperoxyeicosatetraenoate = an oxoeicosatetraenoate + H2O. It carries out the reaction (15S)-hydroperoxy-(5Z,8Z,11Z,13E)-eicosatetraenoate = 15-oxo-(5Z,8Z,11Z,13E)-eicosatetraenoate + H2O. The enzyme catalyses (15S)-hydroperoxy-(5Z,8Z,11Z,13E)-eicosatetraenoate + AH2 = (15S)-hydroxy-(5Z,8Z,11Z,13E)-eicosatetraenoate + A + H2O. Functionally, catalyzes the isomerization of prostaglandin H2 to prostacyclin (= prostaglandin I2). Its function is as follows. Catalyzes the biosynthesis and metabolism of eicosanoids. Catalyzes the isomerization of prostaglandin H2 to prostacyclin (= prostaglandin I2), a potent mediator of vasodilation and inhibitor of platelet aggregation. Additionally, displays dehydratase activity, toward hydroperoxyeicosatetraenoates (HPETEs), especially toward (15S)-hydroperoxy-(5Z,8Z,11Z,13E)-eicosatetraenoate (15(S)-HPETE). In Danio rerio (Zebrafish), this protein is Prostacyclin synthase.